The sequence spans 506 residues: Sodium-coupled neutral amino acid symporter 2 (506 aa).

Positions 1 to 23 (MKKAEMGRFNISPDEDSSSYSSN) are disordered. Residues 1 to 76 (MKKAEMGRFN…HPGTTSFGMS (76 aa)) lie on the Cytoplasmic side of the membrane. Positions 1–96 (MKKAEMGRFN…SGILGLSYAM (96 aa)) are regulates protein turnover upon amino acid deprivation. Phosphoserine occurs at positions 12, 21, 22, and 55. A helical transmembrane segment spans residues 77-96 (VFNLSNAIVGSGILGLSYAM). Asn82 provides a ligand contact to Na(+). At 97-102 (ANTGIA) the chain is on the extracellular side. Residues 103-123 (LFIILLTFVSIFSLYSVHLLL) form a helical membrane-spanning segment. Residues 124–158 (KTANEGGSLLYEQLGHKAFGMVGKLTASGSITMQN) lie on the Cytoplasmic side of the membrane. Residues 159–177 (IGAMSSYLFIVKYELPLVI) traverse the membrane as a helical segment. Residues 178-188 (QALMNIEDTNG) are Extracellular-facing. Residues 189-209 (LWYLNGDYLVLLVSLVLILPL) form a helical membrane-spanning segment. Topologically, residues 210–217 (SLLRNLGY) are cytoplasmic. Residues 218–238 (LGYTSGLSLLCMMFFLIVVIF) form a helical membrane-spanning segment. Over 239 to 292 (KKFQISCPAEIAFLVNETVNSSLTQPATFLPDMGFNRTESDSCQPRYFIFNSQT) the chain is Extracellular. Cysteines 245 and 281 form a disulfide. Residues Asn258 and Asn274 are each glycosylated (N-linked (GlcNAc...) asparagine). A helical membrane pass occupies residues 293–313 (VYAVPILTFSFVCHPAILPIY). Topologically, residues 314-329 (EELKGRSRRRMMNVSK) are cytoplasmic. A helical membrane pass occupies residues 330-350 (ISFFAMFLMYLLAALFGYLTF). Residues 351 to 371 (YGHVESELLHTYSSVMETDIL) are Extracellular-facing. A helical membrane pass occupies residues 372–392 (LLIVRLAVLVAVTLTVPVVIF). Thr386 is a Na(+) binding site. Residues 393–413 (PIRSSITHLLCASKEFSWWRH) lie on the Cytoplasmic side of the membrane. A helical transmembrane segment spans residues 414–434 (SVITVSILVFTNLLVIFVPNI). The Extracellular segment spans residues 435 to 436 (RD). A helical transmembrane segment spans residues 437-457 (IFGFIGASAAAMLIFILPSAF). Residues 458-472 (YIKLVKKEPMKSVQK) lie on the Cytoplasmic side of the membrane. Residues 473–495 (IGAMFFLLSGIVVMTGSMALIVL) form a helical membrane-spanning segment. Topologically, residues 496–506 (DWVHNAPGGGH) are extracellular.

The protein belongs to the amino acid/polyamine transporter 2 family. Polyubiquitination by NEDD4L regulates the degradation and the activity of SLC38A2.

The protein localises to the cell membrane. It catalyses the reaction L-alanine(in) + Na(+)(in) = L-alanine(out) + Na(+)(out). The enzyme catalyses glycine(in) + Na(+)(in) = glycine(out) + Na(+)(out). The catalysed reaction is L-serine(in) + Na(+)(in) = L-serine(out) + Na(+)(out). It carries out the reaction L-proline(in) + Na(+)(in) = L-proline(out) + Na(+)(out). It catalyses the reaction L-methionine(in) + Na(+)(in) = L-methionine(out) + Na(+)(out). The enzyme catalyses L-histidine(in) + Na(+)(in) = L-histidine(out) + Na(+)(out). The catalysed reaction is L-asparagine(in) + Na(+)(in) = L-asparagine(out) + Na(+)(out). It carries out the reaction L-glutamine(in) + Na(+)(in) = L-glutamine(out) + Na(+)(out). It catalyses the reaction L-threonine(in) + Na(+)(in) = L-threonine(out) + Na(+)(out). The enzyme catalyses L-leucine(in) + Na(+)(in) = L-leucine(out) + Na(+)(out). The catalysed reaction is L-phenylalanine(in) + Na(+)(in) = L-phenylalanine(out) + Na(+)(out). Its activity is regulated as follows. Inhibited by N-methyl-D-glucamine. Inhibited by choline. Allosteric regulation of sodium ions binding by pH. Functionally, symporter that cotransports neutral amino acids and sodium ions from the extracellular to the intracellular side of the cell membrane. The transport is pH-sensitive, Li(+)-intolerant, electrogenic, driven by the Na(+) electrochemical gradient and cotransports of neutral amino acids and sodium ions with a stoichiometry of 1:1. May function in the transport of amino acids at the blood-brain barrier. May function in the transport of amino acids in the supply of maternal nutrients to the fetus through the placenta. Maintains a key metabolic glutamine/glutamate balance underpinning retrograde signaling by dendritic release of the neurotransmitter glutamate. Transports L-proline in differentiating osteoblasts for the efficient synthesis of proline-enriched proteins and provides proline essential for osteoblast differentiation and bone formation during bone development. The sequence is that of Sodium-coupled neutral amino acid symporter 2 from Bos taurus (Bovine).